A 276-amino-acid polypeptide reads, in one-letter code: Undecaprenyl-diphosphatase 2 (276 aa).

8 consecutive transmembrane segments (helical) span residues 1-21 (MSLWFLVFLSVLQGVTELFPV), 44-64 (QLLPFLVALHLGTALALLWYF), 87-107 (GHLMWALIIGTIPTGIVGLLL), 114-134 (VFHDLRIVAIALIVNGVLLWL), 150-170 (MTFKQAFFVGLAQIGALIPGF), 190-210 (AAEFSFLLGTPIIFAAGVLEL), 222-242 (DALLGGVLTAIAAYLSVRFLM), and 251-271 (LASFGVYCVIAGVFCLGWFML).

Belongs to the UppP family.

The protein resides in the cell inner membrane. The enzyme catalyses di-trans,octa-cis-undecaprenyl diphosphate + H2O = di-trans,octa-cis-undecaprenyl phosphate + phosphate + H(+). Its function is as follows. Catalyzes the dephosphorylation of undecaprenyl diphosphate (UPP). Confers resistance to bacitracin. The protein is Undecaprenyl-diphosphatase 2 of Burkholderia lata (strain ATCC 17760 / DSM 23089 / LMG 22485 / NCIMB 9086 / R18194 / 383).